Here is a 932-residue protein sequence, read N- to C-terminus: Glycine dehydrogenase (decarboxylating) (932 aa).

K685 bears the N6-(pyridoxal phosphate)lysine mark.

This sequence belongs to the GcvP family. The glycine cleavage system is composed of four proteins: P, T, L and H. It depends on pyridoxal 5'-phosphate as a cofactor.

The enzyme catalyses N(6)-[(R)-lipoyl]-L-lysyl-[glycine-cleavage complex H protein] + glycine + H(+) = N(6)-[(R)-S(8)-aminomethyldihydrolipoyl]-L-lysyl-[glycine-cleavage complex H protein] + CO2. In terms of biological role, the glycine cleavage system catalyzes the degradation of glycine. The P protein binds the alpha-amino group of glycine through its pyridoxal phosphate cofactor; CO(2) is released and the remaining methylamine moiety is then transferred to the lipoamide cofactor of the H protein. The chain is Glycine dehydrogenase (decarboxylating) from Brucella melitensis biotype 1 (strain ATCC 23456 / CCUG 17765 / NCTC 10094 / 16M).